A 415-amino-acid polypeptide reads, in one-letter code: Homoserine O-succinyltransferase (415 aa).

The AB hydrolase-1 domain maps to 69-383; the sequence is NAVLVCHALN…PHGHDAFLLD (315 aa). Ser-175 functions as the Nucleophile in the catalytic mechanism. Arg-245 is a binding site for substrate. Catalysis depends on residues Asp-344 and His-377. Asp-378 is a binding site for substrate.

The protein belongs to the AB hydrolase superfamily. MetX family. In terms of assembly, homodimer.

Its subcellular location is the cytoplasm. The enzyme catalyses L-homoserine + succinyl-CoA = O-succinyl-L-homoserine + CoA. The protein operates within amino-acid biosynthesis; L-methionine biosynthesis via de novo pathway; O-succinyl-L-homoserine from L-homoserine: step 1/1. In terms of biological role, transfers a succinyl group from succinyl-CoA to L-homoserine, forming succinyl-L-homoserine. The sequence is that of Homoserine O-succinyltransferase from Bordetella pertussis (strain Tohama I / ATCC BAA-589 / NCTC 13251).